The primary structure comprises 107 residues: Phosphoribosyl-ATP pyrophosphatase (107 aa).

It belongs to the PRA-PH family.

The protein localises to the cytoplasm. It catalyses the reaction 1-(5-phospho-beta-D-ribosyl)-ATP + H2O = 1-(5-phospho-beta-D-ribosyl)-5'-AMP + diphosphate + H(+). It functions in the pathway amino-acid biosynthesis; L-histidine biosynthesis; L-histidine from 5-phospho-alpha-D-ribose 1-diphosphate: step 2/9. The sequence is that of Phosphoribosyl-ATP pyrophosphatase (hisE) from Clostridium tetani (strain Massachusetts / E88).